A 250-amino-acid polypeptide reads, in one-letter code: Ribosomal RNA small subunit methyltransferase G (250 aa).

Residues G78, L83, 129 to 130, and R144 contribute to the S-adenosyl-L-methionine site; that span reads AE. Residues 224–250 are disordered; that stretch reads IAAPRKRGGQQRRAGHARGTSNRRRGT. Basic residues predominate over residues 227 to 250; sequence PRKRGGQQRRAGHARGTSNRRRGT.

It belongs to the methyltransferase superfamily. RNA methyltransferase RsmG family.

The protein resides in the cytoplasm. Specifically methylates the N7 position of guanine in position 518 of 16S rRNA. The polypeptide is Ribosomal RNA small subunit methyltransferase G (Nocardioides sp. (strain ATCC BAA-499 / JS614)).